We begin with the raw amino-acid sequence, 176 residues long: Probable inosine/xanthosine triphosphatase (176 aa).

D36 contacts Mg(2+).

The protein belongs to the YjjX NTPase family. In terms of assembly, homodimer. It depends on Mg(2+) as a cofactor. Requires Mn(2+) as cofactor.

The catalysed reaction is XTP + H2O = XDP + phosphate + H(+). It carries out the reaction ITP + H2O = IDP + phosphate + H(+). In terms of biological role, phosphatase that hydrolyzes non-canonical purine nucleotides such as XTP and ITP to their respective diphosphate derivatives. Probably excludes non-canonical purines from DNA/RNA precursor pool, thus preventing their incorporation into DNA/RNA and avoiding chromosomal lesions. The chain is Probable inosine/xanthosine triphosphatase from Saccharolobus islandicus (strain M.16.4 / Kamchatka #3) (Sulfolobus islandicus).